The sequence spans 161 residues: Large ribosomal subunit protein bL17 (161 aa).

Residues 126 to 161 (TAAKKAPKTRRSRKKATASVAEAPTAEAASEEKAAE) are disordered. Over residues 130 to 141 (KAPKTRRSRKKA) the composition is skewed to basic residues. The segment covering 142 to 153 (TASVAEAPTAEA) has biased composition (low complexity).

This sequence belongs to the bacterial ribosomal protein bL17 family. Part of the 50S ribosomal subunit. Contacts protein L32.

The polypeptide is Large ribosomal subunit protein bL17 (Parabacteroides distasonis (strain ATCC 8503 / DSM 20701 / CIP 104284 / JCM 5825 / NCTC 11152)).